The chain runs to 308 residues: Glycine--tRNA ligase alpha subunit (308 aa).

It belongs to the class-II aminoacyl-tRNA synthetase family. As to quaternary structure, tetramer of two alpha and two beta subunits.

The protein localises to the cytoplasm. The catalysed reaction is tRNA(Gly) + glycine + ATP = glycyl-tRNA(Gly) + AMP + diphosphate. The sequence is that of Glycine--tRNA ligase alpha subunit from Brucella canis (strain ATCC 23365 / NCTC 10854 / RM-666).